Reading from the N-terminus, the 357-residue chain is Homoserine O-acetyltransferase (357 aa).

Residues 51–340 (NVIVICHALT…EPYGHDAFLI (290 aa)) enclose the AB hydrolase-1 domain. Ser-147 functions as the Nucleophile in the catalytic mechanism. Position 216 (Arg-216) interacts with substrate. Active-site residues include Asp-306 and His-335. Asp-336 contacts substrate.

This sequence belongs to the AB hydrolase superfamily. MetX family. Homodimer.

It is found in the cytoplasm. The catalysed reaction is L-homoserine + acetyl-CoA = O-acetyl-L-homoserine + CoA. Its pathway is amino-acid biosynthesis; L-methionine biosynthesis via de novo pathway; O-acetyl-L-homoserine from L-homoserine: step 1/1. Its function is as follows. Transfers an acetyl group from acetyl-CoA to L-homoserine, forming acetyl-L-homoserine. The sequence is that of Homoserine O-acetyltransferase from Chlorobium chlorochromatii (strain CaD3).